The sequence spans 293 residues: Glutamyl-Q tRNA(Asp) synthetase (293 aa).

L-glutamate is bound by residues 9 to 13 (RFAPS) and E45. The 'HIGH' region motif lies at 12-22 (PSPSGSLHFGS). 4 residues coordinate Zn(2+): C101, C103, Y115, and C119. Residues Y172 and R190 each coordinate L-glutamate. Positions 228–232 (KLSKQ) match the 'KMSKS' region motif. ATP is bound at residue K231.

Belongs to the class-I aminoacyl-tRNA synthetase family. GluQ subfamily. The cofactor is Zn(2+).

Its function is as follows. Catalyzes the tRNA-independent activation of glutamate in presence of ATP and the subsequent transfer of glutamate onto a tRNA(Asp). Glutamate is transferred on the 2-amino-5-(4,5-dihydroxy-2-cyclopenten-1-yl) moiety of the queuosine in the wobble position of the QUC anticodon. The chain is Glutamyl-Q tRNA(Asp) synthetase from Shewanella frigidimarina (strain NCIMB 400).